The chain runs to 617 residues: E3 ubiquitin-protein ligase synoviolin (617 aa).

At M1–T4 the chain is on the cytoplasmic side. A necessary and sufficient for SEL1L interaction region spans residues M1–A84. The involved in FAM8A1 interaction stretch occupies residues M1–A251. Residues A5–L25 form a helical membrane-spanning segment. Residues K26–P41 lie on the Lumenal side of the membrane. A helical membrane pass occupies residues S42–G62. The Cytoplasmic segment spans residues K63 to D98. Residues F99–L119 traverse the membrane as a helical segment. Residues A120–R140 lie on the Lumenal side of the membrane. Residues I141–H161 traverse the membrane as a helical segment. Over S162 to S169 the chain is Cytoplasmic. Residues V170 to I190 traverse the membrane as a helical segment. Over K191–V224 the chain is Lumenal. The chain crosses the membrane as a helical span at residues L225–I245. The interval K236–R270 is interaction with p53/TP53. At R246 to H617 the chain is on the cytoplasmic side. Zn(2+) contacts are provided by C291, C294, C307, H309, H312, C315, C326, and C329. The segment at C291–R330 adopts an RING-type; atypical zinc-finger fold. Disordered regions lie at residues S337–P375, P393–G453, and R535–H617. The segment covering Q341 to P375 has biased composition (pro residues). The span at P417 to A451 shows a compositional bias: low complexity. Positions G480–R535 are HAF-H domain; necessary to form higher-order Hrd1 complexes. Residues A537–P569 are compositionally biased toward low complexity. The segment covering E591–A600 has biased composition (acidic residues). Phosphoserine is present on S613.

The protein belongs to the HRD1 family. In terms of assembly, homodimer. Interacts with p53/TP53. Interacts with HTT. Component of the HRD1 complex, which comprises at least SYNV1/HRD1, DERL1/2, FAM8A1, HERPUD1/HERP, OS9, SEL1L and UBE2J1. FAM8A1 is stabilized by interaction with SYNV1, which prevents its proteasomal degradation. OS9 and UBE2J1 recruitment to the complex may be mediated by SEL1L. SYNV1 assembles with SEL1L and FAM8A1 through its transmembrane domains, but interaction with its cytoplasmic domain is required to confer stability to FAM8A1 and enhance recruitment of HERPUD1. The HRD1 complex also associates with VIMP and may transfer misfolded proteins from the endoplasmic reticulum to VCP. May form a complex with ERLEC1, HSPA5, OS9 and SEL1L. Interacts with VCP. Interacts with UBXN6. Interacts with BAG6. Interacts with NFE2L1. Interacts (via N-terminus) with components of the pre-B cell receptor, including IGLL1 and VPREB1. Interacts with CREB3L3; this interaction leads to CREB3L3 ubiquitination and proteasomal degradation. In terms of processing, not N-glycosylated. Post-translationally, auto-ubiquitinated. Deubiquitinated by USP19. In terms of tissue distribution, ubiquitously expressed, with highest levels in liver and kidney (at protein level). Up-regulated in synovial tissues from patients with rheumatoid arthritis (at protein level).

The protein localises to the endoplasmic reticulum membrane. The catalysed reaction is S-ubiquitinyl-[E2 ubiquitin-conjugating enzyme]-L-cysteine + [acceptor protein]-L-lysine = [E2 ubiquitin-conjugating enzyme]-L-cysteine + N(6)-ubiquitinyl-[acceptor protein]-L-lysine.. It participates in protein modification; protein ubiquitination. Functionally, E3 ubiquitin-protein ligase which accepts ubiquitin specifically from endoplasmic reticulum-associated UBC7 E2 ligase and transfers it to substrates, promoting their degradation. Component of the endoplasmic reticulum quality control (ERQC) system also called ER-associated degradation (ERAD) involved in ubiquitin-dependent degradation of misfolded endoplasmic reticulum proteins. Also promotes the degradation of normal but naturally short-lived proteins such as SGK. Protects cells from ER stress-induced apoptosis. Protects neurons from apoptosis induced by polyglutamine-expanded huntingtin (HTT) or unfolded GPR37 by promoting their degradation. Sequesters p53/TP53 in the cytoplasm and promotes its degradation, thereby negatively regulating its biological function in transcription, cell cycle regulation and apoptosis. Mediates the ubiquitination and subsequent degradation of cytoplasmic NFE2L1. During the early stage of B cell development, required for degradation of the pre-B cell receptor (pre-BCR) complex, hence supporting further differentiation into mature B cells. This is E3 ubiquitin-protein ligase synoviolin from Homo sapiens (Human).